A 177-amino-acid polypeptide reads, in one-letter code: Putative rubredoxin (177 aa).

The Rubredoxin-like domain maps to 1 to 38 (MKICRICGYQIPEGEFNLLEDGWVCPRCGVGKEELQDS). The Fe cation site is built by cysteine 4, cysteine 7, cysteine 25, and cysteine 28.

It belongs to the rubredoxin family. It depends on Fe(3+) as a cofactor.

The chain is Putative rubredoxin (rdxA) from Methanothermobacter thermautotrophicus (strain ATCC 29096 / DSM 1053 / JCM 10044 / NBRC 100330 / Delta H) (Methanobacterium thermoautotrophicum).